The primary structure comprises 494 residues: MEKWWFNSMLSNEELEHRCGLSKSMNSLGRAIGNTSGSEDLIINDTDKNIHSWSDSGSYSCNNVDDLFGIRDIWSFVSDDTFLVRDSNGDSYSVYFDIENQIFQIDNDSSFLSELESSFSNYLNFSYLNSGSKSDNRYYDRYMYDIKYSWNNHINSCIDSYLHSEISIESYISSSSDNYGDSYISSFICNESVSVSDNGSSSIRTSGNGSDFNIRGRSNDFDINQKYRHLWVQCENCYGLNYKKFFRSKMNICEQCGYHLKMSSSDRIELSIDPGTWDPMDEDMVSIDPIEFHSEEEPYRDRIDSYQRKTGLTEAVQTGIGQLNGIPIAIGVMDFQFMGGSMGSVVGEKITRLIEYATNGSLPIIMVCASGGARMQEGSLSLMQMAKISSASYNYQSNKKLFYVSILTSPTTGGVTASFGMLGDIIIAEPNAYIAFAGKRVIEQTLNKTVPDGSQAAEYSFHKGLFDSIVPRNPLKGVLSELFQLHGFFPLNQN.

A CoA carboxyltransferase N-terminal domain is found at 230–494; that stretch reads LWVQCENCYG…LHGFFPLNQN (265 aa). Cysteine 234, cysteine 237, cysteine 253, and cysteine 256 together coordinate Zn(2+). A C4-type zinc finger spans residues 234 to 256; that stretch reads CENCYGLNYKKFFRSKMNICEQC.

It belongs to the AccD/PCCB family. Acetyl-CoA carboxylase is a heterohexamer composed of biotin carboxyl carrier protein, biotin carboxylase and 2 subunits each of ACCase subunit alpha and ACCase plastid-coded subunit beta (accD). Requires Zn(2+) as cofactor.

It localises to the plastid. Its subcellular location is the chloroplast stroma. The enzyme catalyses N(6)-carboxybiotinyl-L-lysyl-[protein] + acetyl-CoA = N(6)-biotinyl-L-lysyl-[protein] + malonyl-CoA. It functions in the pathway lipid metabolism; malonyl-CoA biosynthesis; malonyl-CoA from acetyl-CoA: step 1/1. Component of the acetyl coenzyme A carboxylase (ACC) complex. Biotin carboxylase (BC) catalyzes the carboxylation of biotin on its carrier protein (BCCP) and then the CO(2) group is transferred by the transcarboxylase to acetyl-CoA to form malonyl-CoA. This is Acetyl-coenzyme A carboxylase carboxyl transferase subunit beta, chloroplastic from Drimys granadensis.